Consider the following 390-residue polypeptide: MPTKKDYYEILGVPRNATQDEIKQAYRRLVRQYHPDLNKDPSAHEKFKEINEAYEVLSDPQKRAQYDQFGHVGDFSGYGDFQGGWQPGGFDFGDLGRNFEDIFENFFGDSIFGDLFGRRREREKAPRKGADLRYDINITLEEAAFGSEKEIYVTRLETCPTCKGKGTEPGTNPVKCDMCNGTGQIRNMRQTPFGQFVQITTCPKCHGTGQIIINPCHECHGTGKVRRKRRVEFKIPAGVDEGYVIRLAGEGEPGENGGPNGDIYIHIHIIPHKIFKRDNEDIWMELPIDYLIALLGGEVEVPTLEGKEKIYIKPGTQTGEVITLKGKGIPYLRNKNQRGDQKIVVKITVPQNLSPKEKELLLEIAKLRGINIEKDKNIFEQIKKAFKGDN.

The 65-residue stretch at 6–70 (DYYEILGVPR…QKRAQYDQFG (65 aa)) folds into the J domain. The segment at 146 to 228 (GSEKEIYVTR…CHGTGKVRRK (83 aa)) adopts a CR-type zinc-finger fold. Zn(2+) is bound by residues Cys159, Cys162, Cys176, Cys179, Cys202, Cys205, Cys216, and Cys219. 4 CXXCXGXG motif repeats span residues 159–166 (CPTCKGKG), 176–183 (CDMCNGTG), 202–209 (CPKCHGTG), and 216–223 (CHECHGTG).

It belongs to the DnaJ family. Homodimer. The cofactor is Zn(2+).

The protein localises to the cytoplasm. Participates actively in the response to hyperosmotic and heat shock by preventing the aggregation of stress-denatured proteins and by disaggregating proteins, also in an autonomous, DnaK-independent fashion. Unfolded proteins bind initially to DnaJ; upon interaction with the DnaJ-bound protein, DnaK hydrolyzes its bound ATP, resulting in the formation of a stable complex. GrpE releases ADP from DnaK; ATP binding to DnaK triggers the release of the substrate protein, thus completing the reaction cycle. Several rounds of ATP-dependent interactions between DnaJ, DnaK and GrpE are required for fully efficient folding. Also involved, together with DnaK and GrpE, in the DNA replication of plasmids through activation of initiation proteins. The polypeptide is Chaperone protein DnaJ (Dictyoglomus thermophilum (strain ATCC 35947 / DSM 3960 / H-6-12)).